We begin with the raw amino-acid sequence, 483 residues long: Pre-glycoprotein polyprotein GP complex (483 aa).

Residue glycine 2 is the site of N-myristoyl glycine; by host attachment. Topologically, residues 2–17 (GQFISFMQEIPIFLQE) are extracellular. Residues 18–32 (ALNIALVAVSLICIV) form a helical membrane-spanning segment. Residue lysine 33 is a topological domain, cytoplasmic. Residues 34–53 (GLVNLYRCGLFQLMVFLVLA) form a helical membrane-spanning segment. Extracellular-facing segments span residues 54-58 (GRSCS) and 59-422 (EETF…TLVD). Cysteine 57 contacts Zn(2+). 2 N-linked (GlcNAc...) asparagine; by host glycosylation sites follow: asparagine 83 and asparagine 95. 6 cysteine pairs are disulfide-bonded: cysteine 92–cysteine 224, cysteine 134–cysteine 162, cysteine 205–cysteine 211, cysteine 269–cysteine 282, cysteine 291–cysteine 300, and cysteine 354–cysteine 375. Asparagine 164 and asparagine 176 each carry an N-linked (GlcNAc...) asparagine; by host glycan. Asparagine 355, asparagine 363, asparagine 380, and asparagine 385 each carry an N-linked (GlcNAc...) asparagine; by host glycan. Residues 423–443 (ICFWSTVFFTSTLFLHLIGFP) form a helical membrane-spanning segment. Residues 444 to 483 (THEHIRGEGCPLPHRLNSMGGCRCGKYLPLKKPTIWHRRH) lie on the Cytoplasmic side of the membrane. Zn(2+) contacts are provided by histidine 445, histidine 447, cysteine 453, histidine 457, cysteine 465, cysteine 467, and histidine 483.

It belongs to the arenaviridae GPC protein family. In terms of assembly, homotetramer; disulfide-linked. Homotetramer. GP2 homotetramers bind through ionic interactions with GP1 homotetramers to form the GP complex together with the stable signal peptide. The GP-C polyprotein interacts with the host protease MBTPS1/SKI-1 resulting in the polyprotein processing. Specific enzymatic cleavages in vivo yield mature proteins. GP-C polyprotein is cleaved in the endoplasmic reticulum by the host protease MBTPS1. Only cleaved glycoprotein is incorporated into virions. Post-translationally, the SSP remains stably associated with the GP complex following cleavage by signal peptidase and plays crucial roles in the trafficking of GP through the secretory pathway. In terms of processing, myristoylation is necessary for GP2-mediated fusion activity.

The protein resides in the virion membrane. The protein localises to the host endoplasmic reticulum membrane. It localises to the host Golgi apparatus membrane. Its subcellular location is the host cell membrane. In terms of biological role, class I viral fusion protein that directs fusion of viral and host endosomal membranes, leading to delivery of the nucleocapsid into the cytoplasm. Membrane fusion is mediated by irreversible conformational changes induced upon acidification in the endosome. Functionally, stable signal peptide (SSP): cleaved and functions as a signal peptide. In addition, it is also retained as the third component of the GP complex. The SSP is required for efficient glycoprotein expression, post-translational maturation cleavage of GP1 and GP2, glycoprotein transport to the cell surface plasma membrane, formation of infectious virus particles, and acid pH-dependent glycoprotein-mediated cell fusion. Its function is as follows. Interacts with the host receptor. This chain is Pre-glycoprotein polyprotein GP complex, found in Tacaribe virus (strain V5) (TCRV).